Reading from the N-terminus, the 942-residue chain is Homeobox transcription factor phx1 (942 aa).

4 stretches are compositionally biased toward polar residues: residues 1–19 (MRSYSNPENGGQINDNINY), 61–73 (HLQGEQQNPTNPN), 99–116 (ADNNSFDNVNSSKLTNPS), and 122–135 (IVKSESEPANSKQN). 5 disordered regions span residues 1-54 (MRSY…MQLP), 61-80 (HLQGEQQNPTNPNYFPPEFD), 87-172 (KQEK…KKQR), 604-651 (WANQ…STST), and 892-922 (SSSGGVYASQPGASGYLSHDQSGSPFEDVYS). Basic and acidic residues predominate over residues 142–151 (SVEKAKENVA). Residues 153 to 164 (ESGTPESGGSTS) are compositionally biased toward low complexity. Positions 164 to 224 (SAPKSKKQRL…QNRRAKSKLI (61 aa)) form a DNA-binding region, homeobox. Polar residues-rich tracts occupy residues 604–614 (WANQLPRQPDS) and 630–641 (SHDTSSEYGNKS).

It localises to the nucleus. Trnascription factor that regulates the expression of the homocitrate synthase (HCS) lys4. The protein is Homeobox transcription factor phx1 (phx1) of Schizosaccharomyces pombe (strain 972 / ATCC 24843) (Fission yeast).